Reading from the N-terminus, the 213-residue chain is MLKRMRDDIKMVFEQDPAARSTLEVITTYAGLHAVWSHLIAHKLYNQKKYVAARAISQISRFFTGIEIHPGAKIGKRLFIDHGMGVVIGETCTIGDNVTIYQGVTLGGTGKERGKRHPDIGDNVLIAAGAKVLGNIKINSNVNIGANSVVLQSVPSYSTVVGIPGHIVKQDGVRVGKTFDHRHLPDPIYEQIKHLERQLEKTRNGEIQDDYII.

It belongs to the transferase hexapeptide repeat family.

Its subcellular location is the cytoplasm. It catalyses the reaction L-serine + acetyl-CoA = O-acetyl-L-serine + CoA. The protein operates within amino-acid biosynthesis; L-cysteine biosynthesis; L-cysteine from L-serine: step 1/2. The protein is Serine acetyltransferase (cysE) of Staphylococcus aureus (strain COL).